The sequence spans 284 residues: Bifunctional protein FolD 1 (284 aa).

NADP(+) contacts are provided by residues 166–168 and Ile232; that span reads GAS.

Belongs to the tetrahydrofolate dehydrogenase/cyclohydrolase family. Homodimer.

The catalysed reaction is (6R)-5,10-methylene-5,6,7,8-tetrahydrofolate + NADP(+) = (6R)-5,10-methenyltetrahydrofolate + NADPH. The enzyme catalyses (6R)-5,10-methenyltetrahydrofolate + H2O = (6R)-10-formyltetrahydrofolate + H(+). Its pathway is one-carbon metabolism; tetrahydrofolate interconversion. In terms of biological role, catalyzes the oxidation of 5,10-methylenetetrahydrofolate to 5,10-methenyltetrahydrofolate and then the hydrolysis of 5,10-methenyltetrahydrofolate to 10-formyltetrahydrofolate. The polypeptide is Bifunctional protein FolD 1 (Pseudomonas syringae pv. syringae (strain B728a)).